The sequence spans 355 residues: Double-stranded RNA-binding protein 4 (355 aa).

2 consecutive DRBM domains span residues 4 to 73 (VYKG…SLTP) and 82 to 150 (AYKN…SIKN). Over residues 149–188 (KNGNSNQTGSPTLPSERQEDVNSNVKSSPQEIHSQPSSKV) the composition is skewed to polar residues. The interval 149 to 193 (KNGNSNQTGSPTLPSERQEDVNSNVKSSPQEIHSQPSSKVVMTPD) is disordered.

In terms of assembly, heterodimer with DRB1 or DRB5. Interacts with DCL4 and cauliflower mosaic virus (CaMV) transactivator/viroplasmin protein. Interaction with CaMV transactivator/viroplasmin protein inhibits RNA silencing ability of DRB4. In terms of tissue distribution, expressed in roots, leaf vasculature, shoot apical meristem (SAM) and developing anthers.

The protein localises to the nucleus. In terms of biological role, double-stranded RNA-binding protein involved in RNA-mediated post-transcriptional gene silencing (PTGS). Functions in the trans-acting small interfering RNAs (ta-siRNAs) biogenesis by binding and assisting DICER-LIKE 4 (DCL4). Required for DCL4 activity. Required for the 21 nucleotide ta-siRNAs production of the TAS3 transcript in leaves but not in flowers. Plays an important role in silencing RNA of both DNA and RNA viruses. Involved with argonaute 7 (AGO7) and RDR6 in turnip crinkle virus (TCV) silencing. May not be directly involved in viral siRNA production. May stabilize the 21 nucleotide viral siRNAs and deliver them to the RISC complex. Targeted by the viral silencing suppressor (VSR) transactivator/viroplasmin (TAV) protein of the cauliflower mosaic virus (CaMV) that inactivates DRB4 function in RNA silencing. Probably not involved in the guide strand selection from RNA duplexes. Involved in leaf morphology through its function in ta-siRNA-mediated silencing. In Arabidopsis thaliana (Mouse-ear cress), this protein is Double-stranded RNA-binding protein 4 (DBR4).